The sequence spans 145 residues: 3-dehydroquinate dehydratase (145 aa).

The active-site Proton acceptor is tyrosine 24. Positions 75, 81, and 88 each coordinate substrate. Residue histidine 101 is the Proton donor of the active site. Residues 102–103 (LS) and arginine 112 each bind substrate.

It belongs to the type-II 3-dehydroquinase family. Homododecamer.

The catalysed reaction is 3-dehydroquinate = 3-dehydroshikimate + H2O. The protein operates within metabolic intermediate biosynthesis; chorismate biosynthesis; chorismate from D-erythrose 4-phosphate and phosphoenolpyruvate: step 3/7. Catalyzes a trans-dehydration via an enolate intermediate. The chain is 3-dehydroquinate dehydratase from Phenylobacterium zucineum (strain HLK1).